A 107-amino-acid polypeptide reads, in one-letter code: UPF0122 protein STH1464 (107 aa).

Belongs to the UPF0122 family.

Its function is as follows. Might take part in the signal recognition particle (SRP) pathway. This is inferred from the conservation of its genetic proximity to ftsY/ffh. May be a regulatory protein. This chain is UPF0122 protein STH1464, found in Symbiobacterium thermophilum (strain DSM 24528 / JCM 14929 / IAM 14863 / T).